The primary structure comprises 341 residues: HTH-type transcriptional repressor PurR (341 aa).

An HTH lacI-type domain is found at 2–56; the sequence is ATIKDVAKRAGVSTTTVSHVINKTRFVAEETKAAVRAAIKELHYSPSAVARSLKV. Positions 4 to 23 form a DNA-binding region, H-T-H motif; sequence IKDVAKRAGVSTTTVSHVIN. The DNA-binding element occupies 48 to 56; that stretch reads SAVARSLKV. Positions 73, 190, 192, 221, and 275 each coordinate hypoxanthine.

In terms of assembly, homodimer.

It participates in purine metabolism; purine nucleotide biosynthesis [regulation]. Functionally, is the main repressor of the genes involved in the de novo synthesis of purine nucleotides, regulating purB, purC, purEK, purF, purHD, purL, purMN and guaBA expression. PurR is allosterically activated to bind its cognate DNA by binding the purine corepressors, hypoxanthine or guanine, thereby effecting transcription repression. The sequence is that of HTH-type transcriptional repressor PurR from Pectobacterium atrosepticum (strain SCRI 1043 / ATCC BAA-672) (Erwinia carotovora subsp. atroseptica).